The following is a 290-amino-acid chain: Shikimate dehydrogenase (NADP(+)) (290 aa).

Residues Ser-20–Ser-22 and Thr-67 each bind shikimate. Lys-71 (proton acceptor) is an active-site residue. Asn-92 and Asp-107 together coordinate shikimate. NADP(+) is bound by residues Gly-130–Ala-134 and Leu-227. Tyr-229 provides a ligand contact to shikimate. Gly-250 contacts NADP(+).

It belongs to the shikimate dehydrogenase family. Homodimer.

It carries out the reaction shikimate + NADP(+) = 3-dehydroshikimate + NADPH + H(+). It participates in metabolic intermediate biosynthesis; chorismate biosynthesis; chorismate from D-erythrose 4-phosphate and phosphoenolpyruvate: step 4/7. Functionally, involved in the biosynthesis of the chorismate, which leads to the biosynthesis of aromatic amino acids. Catalyzes the reversible NADPH linked reduction of 3-dehydroshikimate (DHSA) to yield shikimate (SA). The polypeptide is Shikimate dehydrogenase (NADP(+)) (Syntrophomonas wolfei subsp. wolfei (strain DSM 2245B / Goettingen)).